A 258-amino-acid chain; its full sequence is MAKRLDLKGVNIYYGSFQAVLDVSLAVLPRSVTAFIGASGCGKTTVLRTLNRMHEVVPGARVEGTVLLDDEDIYAPGIDPVGVRRAIGMVFQRPNPFPAMSIRDNVVAGLKLQGVRNRKVLDDTAEYFLRGTNLWDEVKDRLDKPGGGLSGGQQQRLCIARAIAVQPDVLLMDEPCSSLDPISTMAIEELIGELKQEYTIVIVTHNMQQAARVSDQTAFFNLEAVGRPGRLVEIDDTEKIFSNPTEKATEDYISGRFG.

Positions 5-247 (LDLKGVNIYY…EKIFSNPTEK (243 aa)) constitute an ABC transporter domain. 37 to 44 (GASGCGKT) lines the ATP pocket.

It belongs to the ABC transporter superfamily. Phosphate importer (TC 3.A.1.7) family. The complex is composed of two ATP-binding proteins (PstB), two transmembrane proteins (PstC and PstA) and a solute-binding protein (PstS).

It localises to the cell membrane. It catalyses the reaction phosphate(out) + ATP + H2O = ADP + 2 phosphate(in) + H(+). Part of the ABC transporter complex PstSACB involved in phosphate import. Responsible for energy coupling to the transport system. The protein is Phosphate import ATP-binding protein PstB of Mycobacterium leprae (strain TN).